The chain runs to 507 residues: Zinc finger CCCH-type with G patch domain-containing protein (507 aa).

Met-1 carries the N-acetylmethionine modification. The disordered stretch occupies residues 88 to 125 (PVDPGNDSKTVPGSEVQPTPTSSALEEEEEDPDLEDLS). A compositionally biased stretch (polar residues) spans 94 to 111 (DSKTVPGSEVQPTPTSSA). Over residues 112-123 (LEEEEEDPDLED) the composition is skewed to acidic residues. The C3H1-type zinc finger occupies 170–196 (KSLKPCPFFLEGKCRFKENCRFSHGQL). Residues 264–283 (LRTEATDSSDSDTGDASDSS) are disordered. Ser-272 bears the Phosphoserine mark. Position 276 is a phosphothreonine (Thr-276). The G-patch domain maps to 309-355 (TRGIGSKLLVKMGYEFGKGLGRHAEGRVEPIHAVVLPRGKSLDQCAE). Ser-349 carries the post-translational modification Phosphoserine. 2 disordered regions span residues 359-389 (KKTKQGQTGASRPPRCRRRSSRPEGRPPPRN) and 486-507 (AQEADLQRKQRKADTHRKMTEF). Positions 487 to 507 (QEADLQRKQRKADTHRKMTEF) are enriched in basic and acidic residues.

Interacts with CHD4/Mi-2; the interaction is direct.

It is found in the nucleus. In terms of biological role, transcription repressor that specifically binds the 5'-GGAG[GA]A[GA]A-3' consensus sequence. Represses transcription by recruiting the chromatin multiprotein complex NuRD to target promoters. Negatively regulates expression of EGFR, a gene involved in cell proliferation, survival and migration. Its ability to repress genes of the EGFR pathway suggest it may act as a tumor suppressor. This chain is Zinc finger CCCH-type with G patch domain-containing protein (Zgpat), found in Rattus norvegicus (Rat).